The sequence spans 227 residues: Casparian strip membrane protein 2 (227 aa).

At 1–59 the chain is on the cytoplasmic side; the sequence is MSSTSEATVIHMDGAAGKTPATAVPPPPPPAPTAPVQQQRKAGGVPFLLRSGAEGFRRC. The tract at residues 17–37 is disordered; that stretch reads GKTPATAVPPPPPPAPTAPVQ. Over residues 23-33 the composition is skewed to pro residues; that stretch reads AVPPPPPPAPT. Residues 60–80 form a helical membrane-spanning segment; that stretch reads MALLDLLLRVAAMGPTLAAAI. Over 81-107 the chain is Extracellular; sequence STGTSDETLSVFTHYFQFRARFDDFSA. Residues 108 to 128 traverse the membrane as a helical segment; that stretch reads FTFFMVANAVAAGYLLMSLPF. The Cytoplasmic portion of the chain corresponds to 129-149; sequence SAFGVIRPKATSVRLLLLICD. The helical transmembrane segment at 150-170 threads the bilayer; that stretch reads TIMVVLVTAAASAAAAIVYVA. Over 171–197 the chain is Extracellular; the sequence is HEGNRRANWVPICMQFHGFCKRTSGAV. A helical transmembrane segment spans residues 198-218; the sequence is VASFLAVLIFILLVFLGACAI. Topologically, residues 219 to 227 are cytoplasmic; that stretch reads RRRHTTTKH.

It belongs to the Casparian strip membrane proteins (CASP) family. As to quaternary structure, homodimer and heterodimers.

Its subcellular location is the cell membrane. In terms of biological role, regulates membrane-cell wall junctions and localized cell wall deposition. Required for establishment of the Casparian strip membrane domain (CSD) and the subsequent formation of Casparian strips, a cell wall modification of the root endodermis that determines an apoplastic barrier between the intraorganismal apoplasm and the extraorganismal apoplasm and prevents lateral diffusion. This is Casparian strip membrane protein 2 from Brachypodium distachyon (Purple false brome).